A 258-amino-acid chain; its full sequence is Envelope glycoprotein L (258 aa).

The first 31 residues, 1-31 (MYECMFFSHRLTIGFYIPLIVLTTMSSLSES), serve as a signal peptide directing secretion. The region spanning 36 to 243 (QKTACTVAAI…ILYQASLSGP (208 aa)) is the gL betaherpesvirus-type domain. Residues C145 and C150 are joined by a disulfide bond.

This sequence belongs to the herpesviridae glycoprotein L (gL) family. Betaherpesvirinae gL subfamily. Interacts with glycoprotein H (gH); this interaction is necessary for the correct processing and cell surface expression of gH. Forms the envelope pentamer complex (PC) composed of gH, gL, UL128, UL130, and UL131A. The pentamer interacts with host NRP2. Forms the envelope trimer complex composed of gH, gL, and gO. The trimer interacts with host PDGFRA.

Its subcellular location is the virion membrane. The protein resides in the host cell membrane. It is found in the host Golgi apparatus. The protein localises to the host trans-Golgi network. Functionally, the heterodimer glycoprotein H-glycoprotein L is required for the fusion of viral and plasma membranes leading to virus entry into the host cell. Acts as a functional inhibitor of gH and maintains gH in an inhibited form. Upon binding to host integrins, gL dissociates from gH leading to activation of the viral fusion glycoproteins gB and gH. In human cytomegalovirus, forms two distincts complexes to mediate viral entry, a trimer and a pentamer at the surface of the virion envelope. The gH-gL-gO trimer is required for infection in fibroblasts by interacting with host PDGFRA. The gH-gL-UL128-UL130-UL131A pentamer is essential for viral entry in epithelial, endothelial and myeloid cells via interaction with host NRP2. The protein is Envelope glycoprotein L of Guinea pig cytomegalovirus (strain 22122) (GPCMV).